Consider the following 778-residue polypeptide: MHKKSLPLMALRDMVVFPGVIAPIFVGRPKSLQALSHTTISEEDNSKYILVTLQKKFDQENPSTHELYNTAILAKIIQIVKLPNNTAKILIEAVARVKLSNIKGEEAFEANYEIIPDEEIFDVNNMRSLVDNAVQLFSKYAINDKKVNAEIIETINKEISNSTNFIDIINILASHLITSLEAKQHLLEETSPFKRITTVISMLNSNIVNSETEQALQKRVRKQIEKTQRDYYLHEQMKAIQKELDEDKSELADIENKIKSLKLSKEAKEKAEAELKKLRTMNQMSAESGVTRNYLETLLSLPWGKYDNSKIDINQAEKILNRDHFGLEKVKERIIEYLAVLQRSSKIRGPILCLIGPPGVGKTSLVKSIAEGMGRKYTKLALGGVRDEAEIRGHRKTYLGSMPGKILGQLKKVKTSNPVMLLDEIDKMSSDFRGDPASALLEVLDPEQNSHFVDHYLEVEYDLSNVIFIATANSHDLPRALSDRMEKIYISGYVEETKLQIARNYLVPKQFKMHKIKKDEITISETAILDLIRYYTKESGVRALEREIGALTRKALKQILADKSVKHIAIDSNHLEEFLGAKKYNFGLAEKEDQIGSTTGLAYTEVGGELLTIEALAFPGKGEIKTTGKLGDVMKESAMAAYSCFRSRATNFGLKYDNYKDFDIHIHVPAGAIPKDGPSAGCALFTTIVSLMTKIPVHRTVAMTGEITLRGNVLPIGGLKEKLLAASRGGIKTVLIPEENVKDLKDIPPNIKESLEIISVSNIDQVLKHALVGTPINK.

Residues 6–207 (LPLMALRDMV…TVISMLNSNI (202 aa)) enclose the Lon N-terminal domain. 356–363 (GPPGVGKT) is a binding site for ATP. The Lon proteolytic domain occupies 592–773 (EDQIGSTTGL…DQVLKHALVG (182 aa)). Active-site residues include Ser679 and Lys722.

Belongs to the peptidase S16 family. Homohexamer. Organized in a ring with a central cavity.

It is found in the cytoplasm. It carries out the reaction Hydrolysis of proteins in presence of ATP.. In terms of biological role, ATP-dependent serine protease that mediates the selective degradation of mutant and abnormal proteins as well as certain short-lived regulatory proteins. Required for cellular homeostasis and for survival from DNA damage and developmental changes induced by stress. Degrades polypeptides processively to yield small peptide fragments that are 5 to 10 amino acids long. Binds to DNA in a double-stranded, site-specific manner. The chain is Lon protease from Rickettsia conorii (strain ATCC VR-613 / Malish 7).